Consider the following 285-residue polypeptide: Probable endonuclease 4 (285 aa).

Zn(2+)-binding residues include His-69, His-109, Glu-145, Asp-179, His-182, His-216, Asp-229, His-231, and Glu-261.

It belongs to the AP endonuclease 2 family. It depends on Zn(2+) as a cofactor.

It carries out the reaction Endonucleolytic cleavage to 5'-phosphooligonucleotide end-products.. Endonuclease IV plays a role in DNA repair. It cleaves phosphodiester bonds at apurinic or apyrimidinic (AP) sites, generating a 3'-hydroxyl group and a 5'-terminal sugar phosphate. The sequence is that of Probable endonuclease 4 from Salmonella typhi.